A 265-amino-acid polypeptide reads, in one-letter code: 3-methyl-2-oxobutanoate hydroxymethyltransferase (265 aa).

Asp45 and Asp84 together coordinate Mg(2+). 3-methyl-2-oxobutanoate contacts are provided by residues 45–46, Asp84, and Lys114; that span reads DS. Glu116 lines the Mg(2+) pocket. The active-site Proton acceptor is the Glu183.

This sequence belongs to the PanB family. As to quaternary structure, homodecamer; pentamer of dimers. Mg(2+) serves as cofactor.

It is found in the cytoplasm. It carries out the reaction 3-methyl-2-oxobutanoate + (6R)-5,10-methylene-5,6,7,8-tetrahydrofolate + H2O = 2-dehydropantoate + (6S)-5,6,7,8-tetrahydrofolate. The protein operates within cofactor biosynthesis; (R)-pantothenate biosynthesis; (R)-pantoate from 3-methyl-2-oxobutanoate: step 1/2. Functionally, catalyzes the reversible reaction in which hydroxymethyl group from 5,10-methylenetetrahydrofolate is transferred onto alpha-ketoisovalerate to form ketopantoate. The polypeptide is 3-methyl-2-oxobutanoate hydroxymethyltransferase (Salinibacter ruber (strain DSM 13855 / M31)).